Reading from the N-terminus, the 142-residue chain is MDQTLSDFGTVFVFLLLGIIFVVGGYLTARLLRPSRPNPEKLAIYECGEEAVGSAWVKFNIRFYVVALIFIIFDVEVVFLFPWATVFKQLGEFALIEALVFAGILVIGLVYAWVKGDLDWVRPTPNIPKMPVLEEDESQVVS.

3 helical membrane-spanning segments follow: residues 8 to 28 (FGTVFVFLLLGIIFVVGGYLT), 63 to 83 (FYVVALIFIIFDVEVVFLFPW), and 93 to 113 (FALIEALVFAGILVIGLVYAW).

Belongs to the complex I subunit 3 family. NDH-1 is composed of 14 different subunits. Subunits NuoA, H, J, K, L, M, N constitute the membrane sector of the complex.

The protein resides in the cell inner membrane. The catalysed reaction is a quinone + NADH + 5 H(+)(in) = a quinol + NAD(+) + 4 H(+)(out). Functionally, NDH-1 shuttles electrons from NADH, via FMN and iron-sulfur (Fe-S) centers, to quinones in the respiratory chain. The immediate electron acceptor for the enzyme in this species is believed to be a menaquinone. Couples the redox reaction to proton translocation (for every two electrons transferred, four hydrogen ions are translocated across the cytoplasmic membrane), and thus conserves the redox energy in a proton gradient. The protein is NADH-quinone oxidoreductase subunit A of Chlorobium phaeobacteroides (strain BS1).